Consider the following 77-residue polypeptide: Acyl carrier protein (77 aa).

Positions 1–76 (MADFEKIKSI…DVIKFIDKLK (76 aa)) constitute a Carrier domain. The residue at position 36 (Ser-36) is an O-(pantetheine 4'-phosphoryl)serine.

It belongs to the acyl carrier protein (ACP) family. Post-translationally, 4'-phosphopantetheine is transferred from CoA to a specific serine of apo-ACP by AcpS. This modification is essential for activity because fatty acids are bound in thioester linkage to the sulfhydryl of the prosthetic group.

It localises to the cytoplasm. The protein operates within lipid metabolism; fatty acid biosynthesis. In terms of biological role, carrier of the growing fatty acid chain in fatty acid biosynthesis. The protein is Acyl carrier protein of Leptospira biflexa serovar Patoc (strain Patoc 1 / Ames).